The chain runs to 67 residues: Phycobilisome 7.8 kDa linker polypeptide, allophycocyanin-associated, core (67 aa).

The CpcD-like domain maps to 1 to 56 (MRMFRITACVPSQTRIRTQRELQNTYFTKLVPYDNSFREQQRIMKMGGKIVKVELA).

The protein belongs to the phycobilisome linker protein family.

The protein resides in the cellular thylakoid membrane. In terms of biological role, rod linker protein, associated with allophycocyanin. Linker polypeptides determine the state of aggregation and the location of the disk-shaped phycobiliprotein units within the phycobilisome and modulate their spectroscopic properties in order to mediate a directed and optimal energy transfer. The protein is Phycobilisome 7.8 kDa linker polypeptide, allophycocyanin-associated, core (apcC) of Synechocystis sp. (strain ATCC 27184 / PCC 6803 / Kazusa).